The following is an 848-amino-acid chain: Transforming growth factor beta receptor type 3 (848 aa).

The N-terminal stretch at 1 to 20 is a signal peptide; sequence MTLHCVVALFALISSCLATA. The Extracellular portion of the chain corresponds to 21–784; that stretch reads GPEPGVQCAL…IFHGLDTLTV (764 aa). Asn-34 and Asn-141 each carry an N-linked (GlcNAc...) asparagine glycan. Residues Cys-52 and Cys-197 are joined by a disulfide bond. The segment at 390–448 is disordered; it reads SGEGAARHGGLPFPFPYIPRRGRQDGGKDRLPRPKDPVVPSIQLLPGPREPQEAQGSRD. Basic and acidic residues predominate over residues 411–425; the sequence is GRQDGGKDRLPRPKD. Residues 454 to 729 enclose the ZP domain; the sequence is RCDSEKMLVA…PKCVLPDEAC (276 aa). Asn-491 is a glycosylation site (N-linked (GlcNAc...) asparagine). O-linked (Xyl...) (glycosaminoglycan) serine glycans are attached at residues Ser-529, Ser-533, and Ser-544. 3 N-linked (GlcNAc...) asparagine glycosylation sites follow: Asn-570, Asn-589, and Asn-696. 3 disulfides stabilise this stretch: Cys-638/Cys-704, Cys-659/Cys-729, and Cys-709/Cys-722. An interaction with TGF-beta ligand region spans residues 736–750; the sequence is MIWAMMQNKKTFTKP. Residues 785 to 806 form a helical membrane-spanning segment; sequence MGIAFAAFVIGALLTGALWYIY. Residues 807–848 lie on the Cytoplasmic side of the membrane; it reads SHTGDSAGRQPVPTSPPASENSSAAHSLGSTQSTPCSSSSAA. The segment at 813 to 848 is disordered; sequence AGRQPVPTSPPASENSSAAHSLGSTQSTPCSSSSAA. The segment covering 833–848 has biased composition (low complexity); sequence SLGSTQSTPCSSSSAA. Thr-837 is modified (phosphothreonine).

Forms homodimers and homooligomers. Interacts with DYNLT4. Interacts with integrin ITGA5:ITGB1; this interaction promotes the internalization and trafficking of ITGA5:ITGB1 into endocytic vesicles. Interacts with TGFB1, BMP2, BMP5, BMP7 or GDF5 and inhibin A via the ligand binding domains. Interacts with ALK3/BMPR1A; this interaction results in the cell surface retention of BMPR1A. Interacts with ALK6/BMPR1B; this interaction enhances BMPR1B-mediated stimulation of the BMP signaling pathway. Interacts with the scaffolding protein beta-arrestin2/ARRB2; this interaction mediates internalization of TGFBR3 and thus regulates migration, actin cytoskeleton and activation of CDC42. In terms of processing, extensively modified by glycosaminoglycan groups (GAG). Phosphorylated in the cytoplasmic domain by the type II receptor TGFBR2 at THR-837 to mediate recruitment of ARRB2 and subsequent internalization of TGFBR2 and TGFBR3.

The protein resides in the cell membrane. It localises to the secreted. Its subcellular location is the extracellular space. It is found in the extracellular matrix. Cell surface receptor that regulates diverse cellular processes including cell proliferation, differentiation, migration, and apoptosis. Initiates BMP, inhibin, and TGF-beta signaling pathways by interacting with different ligands including TGFB1, BMP2, BMP5, BMP7 or GDF5. Alternatively, acts as a cell surface coreceptor for BMP ligands, serving to enhance ligand binding by differentially regulating BMPR1A/ALK3 and BMPR1B/ALK6 receptor trafficking. Promotes epithelial cell adhesion, focal adhesion formation and integrin signaling during epithelial cell spreading on fibronectin. By interacting with the scaffolding protein beta-arrestin2/ARRB2, regulates migration or actin cytoskeleton and promotes the activation of CDC42 as well as the inhibition of NF-kappa-B. In gonadotrope cells, acts as an inhibin A coreceptor and regulates follicle-stimulating hormone (FSH) levels and female fertility. Plays a role in the inhibition of directed and random cell migration in epithelial cells by altering the actin cytoskeletal organization. Participates in epithelial-mesenchymal transformation (EMT) upon binding to BMP2 or TGFB2, by activating the PAR6/SMURF1/RHOA pathway. The protein is Transforming growth factor beta receptor type 3 (TGFBR3) of Sus scrofa (Pig).